A 635-amino-acid chain; its full sequence is Protein OPG056 (635 aa).

It belongs to the orthopoxvirus OPG056 family. Interacts with protein OPG164. Interacts with protein OPG064.

The protein resides in the virion membrane. The protein localises to the host endosome. Its function is as follows. Plays a role in intracellular enveloped virus (IEV) transport to the cell surface through microtubule transport. Together with protein OPG064, forms a complex that interacts with host KLC2 (kinesin light chain isoform 2) to engage the kinesin-1 complex and thereby promote IEV trafficking. The polypeptide is Protein OPG056 (OPG056) (Homo sapiens (Human)).